Consider the following 481-residue polypeptide: Squalene epoxidase erg1 (481 aa).

Residues 28–48 (HADVVIIGAGVLGCALAVALG) traverse the membrane as a helical segment. FAD is bound by residues 38–39 (VL), 58–59 (EA), arginine 66, and arginine 138. N-linked (GlcNAc...) asparagine glycosylation is present at asparagine 146. Aspartate 319 and methionine 332 together coordinate FAD. 2 helical membrane-spanning segments follow: residues 425–445 (KPSVLFVHFFSVALLSLWVLL) and 452–472 (LFPVALFKCIMTFWTACVVIF).

This sequence belongs to the squalene monooxygenase family. FAD serves as cofactor.

Its subcellular location is the endoplasmic reticulum membrane. The protein resides in the microsome membrane. The enzyme catalyses squalene + reduced [NADPH--hemoprotein reductase] + O2 = (S)-2,3-epoxysqualene + oxidized [NADPH--hemoprotein reductase] + H2O + H(+). Its pathway is steroid metabolism; ergosterol biosynthesis. Squalene epoxidase; part of the third module of ergosterol biosynthesis pathway that includes the late steps of the pathway. Erg1 catalyzes the epoxidation of squalene into 2,3-epoxysqualene. The third module or late pathway involves the ergosterol synthesis itself through consecutive reactions that mainly occur in the endoplasmic reticulum (ER) membrane. Firstly, the squalene synthase erg9 catalyzes the condensation of 2 farnesyl pyrophosphate moieties to form squalene, which is the precursor of all steroids. Squalene synthase is crucial for balancing the incorporation of farnesyl diphosphate (FPP) into sterol and nonsterol isoprene synthesis. Secondly, squalene is converted into lanosterol by the consecutive action of the squalene epoxidase erg1 and the lanosterol synthase erg7. Then, the delta(24)-sterol C-methyltransferase erg6 methylates lanosterol at C-24 to produce eburicol. Eburicol is the substrate of the sterol 14-alpha demethylase encoded by cyp51A and cyp51B, to yield 4,4,24-trimethyl ergosta-8,14,24(28)-trienol. The C-14 reductase erg24 then reduces the C14=C15 double bond which leads to 4,4-dimethylfecosterol. A sequence of further demethylations at C-4, involving the C-4 demethylation complex containing the C-4 methylsterol oxidases erg25A or erg25B, the sterol-4-alpha-carboxylate 3-dehydrogenase erg26 and the 3-keto-steroid reductase erg27, leads to the production of fecosterol via 4-methylfecosterol. The C-8 sterol isomerase erg2 then catalyzes the reaction which results in unsaturation at C-7 in the B ring of sterols and thus converts fecosterol to episterol. The sterol-C5-desaturase erg3B then catalyzes the introduction of a C-5 double bond in the B ring to produce 5-dehydroepisterol. The 2 other sterol-C5-desaturases, erg3A and erg3C, seem to be less important in ergosterol biosynthesis. The C-22 sterol desaturase erg5 further converts 5-dehydroepisterol into ergosta-5,7,22,24(28)-tetraen-3beta-ol by forming the C-22(23) double bond in the sterol side chain. Finally, ergosta-5,7,22,24(28)-tetraen-3beta-ol is substrate of the C-24(28) sterol reductases erg4A and erg4B to produce ergosterol. Possible alternative sterol biosynthetic pathways might exist from fecosterol to ergosterol, depending on the activities of the erg3 isoforms. This Aspergillus fumigatus (strain ATCC MYA-4609 / CBS 101355 / FGSC A1100 / Af293) (Neosartorya fumigata) protein is Squalene epoxidase erg1.